The chain runs to 220 residues: Flavin-dependent thymidylate synthase (220 aa).

Residues 1–208 (MKIDILDKGF…PWTFEAFLKY (208 aa)) form the ThyX domain. FAD-binding positions include Thr55, 78–81 (RHRI), and Glu86. Residues 75–78 (QWFR), 86–90 (ELSGR), and Arg147 each bind dUMP. The ThyX motif motif lies at 78-88 (RHRIASYNELS). Residues 163–165 (NAR) and Asn169 each bind FAD. Arg174 serves as a coordination point for dUMP. Arg174 (involved in ionization of N3 of dUMP, leading to its activation) is an active-site residue.

Belongs to the thymidylate synthase ThyX family. In terms of assembly, homotetramer. The cofactor is FAD.

It carries out the reaction dUMP + (6R)-5,10-methylene-5,6,7,8-tetrahydrofolate + NADPH + H(+) = dTMP + (6S)-5,6,7,8-tetrahydrofolate + NADP(+). The enzyme catalyses dUMP + formaldehyde + NADPH + H(+) = dTMP + NADP(+) + H2O. It participates in pyrimidine metabolism; dTTP biosynthesis. Its function is as follows. Catalyzes the reductive methylation of 2'-deoxyuridine-5'-monophosphate (dUMP or deoxyuridylate) to 2'-deoxythymidine-5'-monophosphate (dTMP or deoxythymidylate) while utilizing 5,10-methylenetetrahydrofolate (mTHF) as the methylene donor, and NAD(P)H and FADH(2) as the reductant. This reaction is a critical step in DNA biosynthesis. Can also use formaldehyde instead of mTHF as a direct methylene donor for dTMP synthesis. However, the tighter binding of ThyX to mTHF (KD of 4 uM) compared to formaldehyde (KD of 20 mM) confirms that methylene tetrahydrofolate acts as the biological carbon donor for ThyX, serving as a formaldehyde carrier/transporter and thus avoiding genotoxic effects. This is Flavin-dependent thymidylate synthase from Thermotoga maritima (strain ATCC 43589 / DSM 3109 / JCM 10099 / NBRC 100826 / MSB8).